The chain runs to 259 residues: MAACRALKAVLVDLSGTLHIEDAAVPGAQEALKRLRGASVIIRFVTNTTKESKQDLLERLRKLEFDISEDEIFTSLTAARSLLERKQVRPMLLVDDRALPDFKGIQTSDPNAVVMGLAPEHFHYQILNQAFRLLLDGAPLIAIHKARYYKRKDGLALGPGPFVTALEYATDTKATVVGKPEKTFFLEALRGTGCEPEEAVMIGDDCRDDVGGAQDVGMLGILVKTGKYRASDEEKINPPPYLTCESFPHAVDHILQHLL.

Positions 13 and 15 each coordinate Mg(2+). Substrate-binding positions include 13-15 (DLS) and 46-47 (TN). Residues 47-71 (NTTKESKQDLLERLRKLEFDISEDE) adopt a coiled-coil conformation. Lys50 carries the post-translational modification N6-succinyllysine. Lys179 lines the substrate pocket. Asp204 is a binding site for Mg(2+).

The protein belongs to the HAD-like hydrolase superfamily. Mg(2+) serves as cofactor.

The polypeptide is Haloacid dehalogenase-like hydrolase domain-containing protein 2 (HDHD2) (Homo sapiens (Human)).